Consider the following 286-residue polypeptide: Isopentenyl-diphosphate Delta-isomerase II (286 aa).

Residues Met-104–Leu-256 enclose the Nudix hydrolase domain. Active-site residues include Cys-141 and Glu-203.

This sequence belongs to the IPP isomerase type 1 family.

The enzyme catalyses isopentenyl diphosphate = dimethylallyl diphosphate. It participates in isoprenoid biosynthesis; dimethylallyl diphosphate biosynthesis; dimethylallyl diphosphate from isopentenyl diphosphate: step 1/1. Its pathway is porphyrin-containing compound metabolism; chlorophyll biosynthesis. In terms of biological role, catalyzes the 1,3-allylic rearrangement of the homoallylic substrate isopentenyl (IPP) to its highly electrophilic allylic isomer, dimethylallyl diphosphate (DMAPP). This Clarkia breweri (Fairy fans) protein is Isopentenyl-diphosphate Delta-isomerase II (IPI2).